The primary structure comprises 372 residues: SAM domain-containing protein SAMSN-1 (372 aa).

Residues 1–71 (MLKRKPSNAS…SGGSLGKKVR (71 aa)) are disordered. The Important for interaction with 14-3-3 proteins motif lies at 20–25 (RSSSFG). Residues Ser23 and Ser34 each carry the phosphoserine modification. Positions 37–49 (KSDDSIEVHDREL) are enriched in basic and acidic residues. The segment covering 52 to 63 (GSEEQSKTSSSG) has biased composition (low complexity). Residue Ser74 is modified to Phosphoserine. Thr76 carries the phosphothreonine modification. 3 positions are modified to phosphoserine: Ser90, Ser97, and Ser119. Residues 90–111 (SEEKEEESGEEALPYRNSDPMI) are disordered. The span at 129 to 146 (LYSGQSSSSGITSCSDGT) shows a compositional bias: low complexity. A disordered region spans residues 129-153 (LYSGQSSSSGITSCSDGTSNRDSFR). Position 160 is a phosphotyrosine (Tyr160). Positions 163–224 (PFCGRAKVHT…KFIYVDVILE (62 aa)) constitute an SH3 domain. The SAM domain maps to 241–305 (ENHQTIQEFL…LSAAESLLDE (65 aa)). Residues 304–372 (DEETTVEHEK…QKIAITESSD (69 aa)) form a disordered region. Residues 317 to 329 (PLSSNPDILSASQ) are compositionally biased toward polar residues.

In terms of assembly, interacts with FASLG. Interacts with phosphotyrosine containing proteins. Interacts (via SH3 domain) with CTTN. Interacts (phosphorylated at Ser-23) with YWHAB, YWHAE, YWHAG, YWHAH, YWHAZ and SFN. Interacts directly with SAP30 and HDAC1. Identified in a complex with SAP30 and HDAC1. Detected in spleen and lymph node (at protein level).

The protein localises to the nucleus. Its subcellular location is the cytoplasm. It localises to the cell projection. The protein resides in the ruffle. In terms of biological role, negative regulator of B-cell activation. Down-regulates cell proliferation (in vitro). Promotes RAC1-dependent membrane ruffle formation and reorganization of the actin cytoskeleton. Regulates cell spreading and cell polarization. Stimulates HDAC1 activity. Regulates LYN activity by modulating its tyrosine phosphorylation. This chain is SAM domain-containing protein SAMSN-1 (Samsn1), found in Mus musculus (Mouse).